The following is a 358-amino-acid chain: Peptide chain release factor 1 (358 aa).

N5-methylglutamine is present on Gln237.

It belongs to the prokaryotic/mitochondrial release factor family. Post-translationally, methylated by PrmC. Methylation increases the termination efficiency of RF1.

The protein resides in the cytoplasm. Its function is as follows. Peptide chain release factor 1 directs the termination of translation in response to the peptide chain termination codons UAG and UAA. The chain is Peptide chain release factor 1 from Streptomyces avermitilis (strain ATCC 31267 / DSM 46492 / JCM 5070 / NBRC 14893 / NCIMB 12804 / NRRL 8165 / MA-4680).